The following is a 982-amino-acid chain: Dual specificity protein kinase Ttk (982 aa).

Disordered regions lie at residues 178–204 (LSHEDKENLSVSALDHTQGSRRSDGTC), 211–230 (TFLHSDQKFSPQEENGPVWR), and 493–574 (AEHQ…PLRL). The span at 211–223 (TFLHSDQKFSPQE) shows a compositional bias: polar residues. The span at 510-533 (MKREENPVKAPEDHQKPFSKETSS) shows a compositional bias: basic and acidic residues. In terms of domain architecture, Protein kinase spans 653–916 (FFIFKMIGRG…IAELLDHPYL (264 aa)). ATP contacts are provided by residues 659-667 (IGRGGSSKV) and Lys681. Residue Asp775 is the Proton acceptor of the active site.

The protein belongs to the protein kinase superfamily. Ser/Thr protein kinase family. Requires Mg(2+) as cofactor. In terms of tissue distribution, barely detectable in adult somatic tissues. Expressed in immature germ cells that have not completed meiosis. In ovary, expressed predominantly in previtellogenic oocytes. In testis, expressed in primary and secondary spermatocytes, but not mature spermatozoa.

It catalyses the reaction L-seryl-[protein] + ATP = O-phospho-L-seryl-[protein] + ADP + H(+). The catalysed reaction is L-threonyl-[protein] + ATP = O-phospho-L-threonyl-[protein] + ADP + H(+). The enzyme catalyses L-tyrosyl-[protein] + ATP = O-phospho-L-tyrosyl-[protein] + ADP + H(+). Functionally, involved in mitotic spindle assembly checkpoint signaling, a process that delays anaphase until chromosomes are bioriented on the spindle, and in the repair of incorrect mitotic kinetochore-spindle microtubule attachments. Required to prevent chromosome segregation errors during meiosis. Required for fin and heart regeneration. This chain is Dual specificity protein kinase Ttk (ttk), found in Danio rerio (Zebrafish).